We begin with the raw amino-acid sequence, 60 residues long: MSLEDRAKATGKNIEGKAQEALGNVTGDPEDKAEGKAKQAESEVRHGVEDVKDNVKKKID.

Basic and acidic residues-rich tracts occupy residues 1–18 (MSLE…EGKA) and 29–60 (PEDK…KKID). The tract at residues 1 to 60 (MSLEDRAKATGKNIEGKAQEALGNVTGDPEDKAEGKAKQAESEVRHGVEDVKDNVKKKID) is disordered.

The protein belongs to the UPF0337 (CsbD) family.

This chain is UPF0337 protein asr1134, found in Nostoc sp. (strain PCC 7120 / SAG 25.82 / UTEX 2576).